A 293-amino-acid chain; its full sequence is Pyridoxal 5'-phosphate synthase subunit PdxS (293 aa).

D25 lines the D-ribose 5-phosphate pocket. The active-site Schiff-base intermediate with D-ribose 5-phosphate is the K82. D103 is a binding site for D-ribulose 5-phosphate. D-ribose 5-phosphate is bound at residue G154. Residue R166 participates in D-glyceraldehyde 3-phosphate binding. Residues G215 and 236-237 (GS) each bind D-ribose 5-phosphate.

The protein belongs to the PdxS/SNZ family. As to quaternary structure, homohexamer and homododecamer. In the presence of PdxT, forms a dodecamer of heterodimers.

The catalysed reaction is aldehydo-D-ribose 5-phosphate + D-glyceraldehyde 3-phosphate + L-glutamine = pyridoxal 5'-phosphate + L-glutamate + phosphate + 3 H2O + H(+). It participates in cofactor biosynthesis; pyridoxal 5'-phosphate biosynthesis. Catalyzes the formation of pyridoxal 5'-phosphate from ribose 5-phosphate (RBP), glyceraldehyde 3-phosphate (G3P) and ammonia. The ammonia is provided by the PdxT subunit. Can also use ribulose 5-phosphate and dihydroxyacetone phosphate as substrates, resulting from enzyme-catalyzed isomerization of RBP and G3P, respectively. The sequence is that of Pyridoxal 5'-phosphate synthase subunit PdxS from Thermotoga maritima (strain ATCC 43589 / DSM 3109 / JCM 10099 / NBRC 100826 / MSB8).